Here is a 529-residue protein sequence, read N- to C-terminus: Alkaline phosphatase, germ cell type (529 aa).

Residues 1–18 (MWGACLLLLGLSLQVCPS) form the signal peptide. Mg(2+) is bound at residue D60. Positions 60 and 110 each coordinate Zn(2+). S110 acts as the Phosphoserine intermediate in catalysis. Residues C139 and C201 are joined by a disulfide bond. N140 carries N-linked (GlcNAc...) asparagine glycosylation. S173 provides a ligand contact to Mg(2+). Residue E234 participates in Ca(2+) binding. N267 and N277 each carry an N-linked (GlcNAc...) asparagine glycan. Residues F287, E288, and D303 each contribute to the Ca(2+) site. Residue E329 participates in Mg(2+) binding. D334, H338, D375, H376, and H450 together coordinate Zn(2+). C485 and C492 are oxidised to a cystine. Residue S502 is the site of GPI-anchor amidated serine attachment. Residues 503 to 529 (AVSPGYMSTLLCLLAGKMLMLMAAAEP) constitute a propeptide, removed in mature form.

This sequence belongs to the alkaline phosphatase family. Homodimer. It depends on Mg(2+) as a cofactor. Zn(2+) is required as a cofactor. Requires Ca(2+) as cofactor. As to expression, embryo and testis.

Its subcellular location is the cell membrane. It carries out the reaction a phosphate monoester + H2O = an alcohol + phosphate. Its activity is regulated as follows. Inhibited by L-leucine, EDTA and heat. Functionally, alkaline phosphatase that can hydrolyze various phosphate compounds. This is Alkaline phosphatase, germ cell type (Alpg) from Mus musculus (Mouse).